The sequence spans 365 residues: Aminomethyltransferase (365 aa).

The protein belongs to the GcvT family. As to quaternary structure, the glycine cleavage system is composed of four proteins: P, T, L and H.

It carries out the reaction N(6)-[(R)-S(8)-aminomethyldihydrolipoyl]-L-lysyl-[protein] + (6S)-5,6,7,8-tetrahydrofolate = N(6)-[(R)-dihydrolipoyl]-L-lysyl-[protein] + (6R)-5,10-methylene-5,6,7,8-tetrahydrofolate + NH4(+). The glycine cleavage system catalyzes the degradation of glycine. The chain is Aminomethyltransferase from Geobacillus thermodenitrificans (strain NG80-2).